The sequence spans 238 residues: Lactate utilization protein A (238 aa).

It belongs to the LutA/YkgE family.

Its function is as follows. Is involved in L-lactate degradation and allows cells to grow with lactate as the sole carbon source. This Bacillus pumilus (strain SAFR-032) protein is Lactate utilization protein A.